Consider the following 128-residue polypeptide: ATP synthase epsilon chain (128 aa).

It belongs to the ATPase epsilon chain family. F-type ATPases have 2 components, CF(1) - the catalytic core - and CF(0) - the membrane proton channel. CF(1) has five subunits: alpha(3), beta(3), gamma(1), delta(1), epsilon(1). CF(0) has three main subunits: a, b and c.

It is found in the cell inner membrane. Its function is as follows. Produces ATP from ADP in the presence of a proton gradient across the membrane. This is ATP synthase epsilon chain from Sulfurovum sp. (strain NBC37-1).